We begin with the raw amino-acid sequence, 126 residues long: Large ribosomal subunit protein uL22 (126 aa).

It belongs to the universal ribosomal protein uL22 family. Part of the 50S ribosomal subunit.

This protein binds specifically to 23S rRNA; its binding is stimulated by other ribosomal proteins, e.g. L4, L17, and L20. It is important during the early stages of 50S assembly. It makes multiple contacts with different domains of the 23S rRNA in the assembled 50S subunit and ribosome. In terms of biological role, the globular domain of the protein is located near the polypeptide exit tunnel on the outside of the subunit, while an extended beta-hairpin is found that lines the wall of the exit tunnel in the center of the 70S ribosome. The chain is Large ribosomal subunit protein uL22 from Jannaschia sp. (strain CCS1).